A 390-amino-acid polypeptide reads, in one-letter code: Centrosomal protein of 44 kDa (390 aa).

Positions 11–195 are binds with microtubules and centrioles; it reads RNLEQVLRLL…ISEDTLSPIT (185 aa). A coiled-coil region spans residues 233 to 269; sequence EITALQTMLAECQENLKKLTSIEKRLDCLEQKMKGKV. The disordered stretch occupies residues 322-348; sequence RKSEVERPASIPLSSGYSTASSDSTPR. Serine 331 and serine 345 each carry phosphoserine. Over residues 335–345 the composition is skewed to low complexity; the sequence is SSGYSTASSDS. Threonine 346 carries the phosphothreonine modification. Residues 361–385 are a coiled coil; the sequence is SEETTIQKMERMKKMFEETAELLKC.

As to quaternary structure, interacts with CROCC. Interacts with POC1B; the interaction is direct and recruits POC1B to centriolar microtubules. Binds to centriolar microtubules.

It is found in the cytoplasm. The protein localises to the cytoskeleton. It localises to the microtubule organizing center. Its subcellular location is the centrosome. The protein resides in the centriole. It is found in the spindle pole. The protein localises to the midbody. Functionally, centriole-enriched microtubule-binding protein involved in centriole biogenesis. In collaboration with CEP295 and POC1B, is required for the centriole-to-centrosome conversion by ensuring the formation of bona fide centriole wall. Functions as a linker component that maintains centrosome cohesion. Associates with CROCC and regulates its stability and localization to the centrosome. In Homo sapiens (Human), this protein is Centrosomal protein of 44 kDa (CEP44).